The primary structure comprises 372 residues: Ketol-acid reductoisomerase (NADP(+)) (372 aa).

The segment at 1-25 (MTETKTQTETETDEEEGTDTDTALD) is disordered. Residues 10–19 (TETDEEEGTD) are compositionally biased toward acidic residues. Residues 24–205 (LDTTIYYDDD…GCTRAGAIET (182 aa)) enclose the KARI N-terminal Rossmann domain. Residues 49–52 (YGSQ), serine 75, serine 77, and 107–110 (DTVQ) contribute to the NADP(+) site. Histidine 131 is a catalytic residue. Residue glycine 157 coordinates NADP(+). The KARI C-terminal knotted domain maps to 206–351 (TFREETETDL…EPLRDLFAWS (146 aa)). 4 residues coordinate Mg(2+): aspartate 214, glutamate 218, glutamate 250, and glutamate 254. A substrate-binding site is contributed by serine 275. A disordered region spans residues 351–372 (SDNEETNDESDVVSEPEAAADD). Positions 352-372 (DNEETNDESDVVSEPEAAADD) are enriched in acidic residues.

It belongs to the ketol-acid reductoisomerase family. It depends on Mg(2+) as a cofactor.

It carries out the reaction (2R)-2,3-dihydroxy-3-methylbutanoate + NADP(+) = (2S)-2-acetolactate + NADPH + H(+). The catalysed reaction is (2R,3R)-2,3-dihydroxy-3-methylpentanoate + NADP(+) = (S)-2-ethyl-2-hydroxy-3-oxobutanoate + NADPH + H(+). Its pathway is amino-acid biosynthesis; L-isoleucine biosynthesis; L-isoleucine from 2-oxobutanoate: step 2/4. It participates in amino-acid biosynthesis; L-valine biosynthesis; L-valine from pyruvate: step 2/4. Involved in the biosynthesis of branched-chain amino acids (BCAA). Catalyzes an alkyl-migration followed by a ketol-acid reduction of (S)-2-acetolactate (S2AL) to yield (R)-2,3-dihydroxy-isovalerate. In the isomerase reaction, S2AL is rearranged via a Mg-dependent methyl migration to produce 3-hydroxy-3-methyl-2-ketobutyrate (HMKB). In the reductase reaction, this 2-ketoacid undergoes a metal-dependent reduction by NADPH to yield (R)-2,3-dihydroxy-isovalerate. The protein is Ketol-acid reductoisomerase (NADP(+)) of Haloquadratum walsbyi (strain DSM 16790 / HBSQ001).